Here is a 199-residue protein sequence, read N- to C-terminus: ATP-dependent Clp protease proteolytic subunit (199 aa).

Catalysis depends on Ser97, which acts as the Nucleophile. Residue His122 is part of the active site.

The protein belongs to the peptidase S14 family. Fourteen ClpP subunits assemble into 2 heptameric rings which stack back to back to give a disk-like structure with a central cavity, resembling the structure of eukaryotic proteasomes.

The protein localises to the cytoplasm. The enzyme catalyses Hydrolysis of proteins to small peptides in the presence of ATP and magnesium. alpha-casein is the usual test substrate. In the absence of ATP, only oligopeptides shorter than five residues are hydrolyzed (such as succinyl-Leu-Tyr-|-NHMec, and Leu-Tyr-Leu-|-Tyr-Trp, in which cleavage of the -Tyr-|-Leu- and -Tyr-|-Trp bonds also occurs).. Its function is as follows. Cleaves peptides in various proteins in a process that requires ATP hydrolysis. Has a chymotrypsin-like activity. Plays a major role in the degradation of misfolded proteins. This Geotalea uraniireducens (strain Rf4) (Geobacter uraniireducens) protein is ATP-dependent Clp protease proteolytic subunit.